Reading from the N-terminus, the 134-residue chain is Small ribosomal subunit protein uS8c (134 aa).

The protein belongs to the universal ribosomal protein uS8 family. As to quaternary structure, part of the 30S ribosomal subunit.

Its subcellular location is the plastid. The protein localises to the chloroplast. One of the primary rRNA binding proteins, it binds directly to 16S rRNA central domain where it helps coordinate assembly of the platform of the 30S subunit. This chain is Small ribosomal subunit protein uS8c (rps8), found in Nicotiana tomentosiformis (Tobacco).